The chain runs to 98 residues: Large ribosomal subunit protein eL21 (98 aa).

Residues M1–E22 form a disordered region. Positions R10–R21 are enriched in basic residues.

It belongs to the eukaryotic ribosomal protein eL21 family.

The protein is Large ribosomal subunit protein eL21 (rpl21e) of Methanocaldococcus jannaschii (strain ATCC 43067 / DSM 2661 / JAL-1 / JCM 10045 / NBRC 100440) (Methanococcus jannaschii).